The following is an 89-amino-acid chain: Small ribosomal subunit protein uS15 (89 aa).

It belongs to the universal ribosomal protein uS15 family. As to quaternary structure, part of the 30S ribosomal subunit. Forms a bridge to the 50S subunit in the 70S ribosome, contacting the 23S rRNA.

Its function is as follows. One of the primary rRNA binding proteins, it binds directly to 16S rRNA where it helps nucleate assembly of the platform of the 30S subunit by binding and bridging several RNA helices of the 16S rRNA. Forms an intersubunit bridge (bridge B4) with the 23S rRNA of the 50S subunit in the ribosome. This chain is Small ribosomal subunit protein uS15, found in Maridesulfovibrio salexigens (strain ATCC 14822 / DSM 2638 / NCIMB 8403 / VKM B-1763) (Desulfovibrio salexigens).